A 133-amino-acid polypeptide reads, in one-letter code: Small ribosomal subunit protein uS8 (133 aa).

Belongs to the universal ribosomal protein uS8 family. Part of the 30S ribosomal subunit. Contacts proteins S5 and S12.

Functionally, one of the primary rRNA binding proteins, it binds directly to 16S rRNA central domain where it helps coordinate assembly of the platform of the 30S subunit. This is Small ribosomal subunit protein uS8 from Micrococcus luteus (Micrococcus lysodeikticus).